Reading from the N-terminus, the 377-residue chain is Chaperone protein DnaJ (377 aa).

A J domain is found at 5 to 70 (DYYQVLGVSR…KKRSAYDQLG (66 aa)). A CR-type zinc finger spans residues 138-216 (GVTKIISFKT…CYGEGRYINT (79 aa)). Zn(2+) contacts are provided by Cys151, Cys154, Cys168, Cys171, Cys190, Cys193, Cys204, and Cys207. CXXCXGXG motif repeat units lie at residues 151-158 (CEACTGKG), 168-175 (CPTCRGSG), 190-197 (CQTCRGAG), and 204-211 (CTKCYGEG).

Belongs to the DnaJ family. In terms of assembly, homodimer. Requires Zn(2+) as cofactor.

The protein resides in the cytoplasm. Functionally, participates actively in the response to hyperosmotic and heat shock by preventing the aggregation of stress-denatured proteins and by disaggregating proteins, also in an autonomous, DnaK-independent fashion. Unfolded proteins bind initially to DnaJ; upon interaction with the DnaJ-bound protein, DnaK hydrolyzes its bound ATP, resulting in the formation of a stable complex. GrpE releases ADP from DnaK; ATP binding to DnaK triggers the release of the substrate protein, thus completing the reaction cycle. Several rounds of ATP-dependent interactions between DnaJ, DnaK and GrpE are required for fully efficient folding. Also involved, together with DnaK and GrpE, in the DNA replication of plasmids through activation of initiation proteins. The sequence is that of Chaperone protein DnaJ from Orientia tsutsugamushi (strain Ikeda) (Rickettsia tsutsugamushi).